A 533-amino-acid polypeptide reads, in one-letter code: MGSCCSRATSPDSGRGGANGYGYSHQTKPAQTTPSYNHPQPPPPAEVRYTPSAMNPPVVPPVVAPPKPTPDTILGKPYDDVRSVYSLGKELGRGQFGVTYLCTEIASGKQYACKSISKRKLVSKADKEDIRREIQIMQHLSGQQNIVEFRGAYEDKSNVHVVMELCAGGELFDRIIAKGHYSERAAATICRAVVNVVNICHFMGVMHRDLKPENFLLATKEENAMLKATDFGLSVFIEEGKMYRDIVGSAYYVAPEVLRRNYGKEIDVWSAGVILYILLSGVPPFWAETEKGIFDAILQGEIDFESQPWPSISESAKDLVRKMLTQDPKKRITSAQVLQHPWLRDGEASDKPIDSAVLSRMKQFRAMNKLKKMALKVIASNLNEEEIKGLKQMFTNMDTDNSGTITYEELKAGLAKLGSKLSEAEVKQLMEAADVDGNGSIDYVEFITATMHRHKLERDEHLFKAFQYFDKDNSGFITRDELESALIEHEMGDTSTIKDIISEVDTDNDGRINYEEFCAMMRGGGMQQPMRLK.

2 stretches are compositionally biased toward polar residues: residues 1–12 and 24–38; these read MGSCCSRATSPD and SHQT…SYNH. A disordered region spans residues 1-53; it reads MGSCCSRATSPDSGRGGANGYGYSHQTKPAQTTPSYNHPQPPPPAEVRYTPSA. Gly-2 carries N-myristoyl glycine lipidation. The 259-residue stretch at 85–343 folds into the Protein kinase domain; the sequence is YSLGKELGRG…SAQVLQHPWL (259 aa). ATP-binding positions include 91-99 and Lys-114; that span reads LGRGQFGVT. Asp-209 serves as the catalytic Proton acceptor. Positions 348–378 are autoinhibitory domain; the sequence is ASDKPIDSAVLSRMKQFRAMNKLKKMALKVI. EF-hand domains are found at residues 385–420, 421–456, 457–492, and 497–527; these read EEIK…LGSK, LSEA…RHKL, ERDE…HEMG, and IKDI…GGMQ. Residues Asp-398, Asp-400, Ser-402, Thr-404, Glu-409, Asp-434, Asp-436, Asn-438, Ser-440, Glu-445, Asp-470, Asp-472, Ser-474, Glu-481, Asp-505, Asp-507, Asp-509, Arg-511, and Glu-516 each coordinate Ca(2+).

Belongs to the protein kinase superfamily. Ser/Thr protein kinase family. CDPK subfamily. Expressed in root tips, leaf veins, mesophyll cells, flower reproductive organs and mature pollen grains.

The protein resides in the membrane. The catalysed reaction is L-seryl-[protein] + ATP = O-phospho-L-seryl-[protein] + ADP + H(+). The enzyme catalyses L-threonyl-[protein] + ATP = O-phospho-L-threonyl-[protein] + ADP + H(+). Activated by calcium. Autophosphorylation may play an important role in the regulation of the kinase activity. In terms of biological role, may play a role in signal transduction pathways that involve calcium as a second messenger. This is Calcium-dependent protein kinase 19 from Oryza sativa subsp. japonica (Rice).